Reading from the N-terminus, the 962-residue chain is Exportin-T (962 aa).

At methionine 1 the chain carries N-acetylmethionine. Position 634 is an N6-acetyllysine (lysine 634).

Found in a complex with XPOT, Ran and tRNA. Probably found in a complex with nucleoporins. Interacts with Ran and tRNA in a GTP-dependent manner.

It is found in the nucleus. The protein resides in the cytoplasm. Mediates the nuclear export of aminoacylated tRNAs. In the nucleus binds to tRNA and to the GTPase Ran in its active GTP-bound form. Docking of this trimeric complex to the nuclear pore complex (NPC) is mediated through binding to nucleoporins. Upon transit of a nuclear export complex into the cytoplasm, disassembling of the complex and hydrolysis of Ran-GTP to Ran-GDP (induced by RANBP1 and RANGAP1, respectively) cause release of the tRNA from the export receptor. XPOT then return to the nuclear compartment and mediate another round of transport. The directionality of nuclear export is thought to be conferred by an asymmetric distribution of the GTP- and GDP-bound forms of Ran between the cytoplasm and nucleus. The protein is Exportin-T (XPOT) of Pongo abelii (Sumatran orangutan).